A 146-amino-acid polypeptide reads, in one-letter code: 3-dehydroquinate dehydratase (146 aa).

Tyrosine 24 acts as the Proton acceptor in catalysis. 3 residues coordinate substrate: asparagine 75, histidine 81, and aspartate 88. Histidine 101 (proton donor) is an active-site residue. Substrate is bound by residues 102–103 and arginine 112; that span reads LS.

Belongs to the type-II 3-dehydroquinase family. In terms of assembly, homododecamer.

The catalysed reaction is 3-dehydroquinate = 3-dehydroshikimate + H2O. The protein operates within metabolic intermediate biosynthesis; chorismate biosynthesis; chorismate from D-erythrose 4-phosphate and phosphoenolpyruvate: step 3/7. Its function is as follows. Catalyzes a trans-dehydration via an enolate intermediate. This is 3-dehydroquinate dehydratase from Maricaulis maris (strain MCS10) (Caulobacter maris).